The chain runs to 784 residues: PWWP domain-containing protein 2A (784 aa).

4 disordered regions span residues 1 to 32 (MAAV…LGRL), 244 to 272 (KPVE…PEDV), 463 to 567 (AKEK…EMQD), and 605 to 654 (SSSA…SSKE). A compositionally biased stretch (basic and acidic residues) spans 244–266 (KPVESIQEESKSFHEEPLVKSEE). A compositionally biased stretch (polar residues) spans 536–556 (TRYSATRSAGETPSEIQSPSN). The span at 605 to 614 (SSSASVCSSD) shows a compositional bias: low complexity. The PWWP domain occupies 684–744 (VGDIVWAKIY…LSQLTPFLEN (61 aa)).

It localises to the nucleus. Its function is as follows. H2A.Z-specific chromatin binding protein which plays an important role in the neural crest cell differentiation and/or migration during early development and is essential for the development of the head and eye. Acts as an adapter between distinct nucleosome components (H3K36me3 or H2A.Z) and chromatin-modifying complexes, contributing to the regulation of the levels of histone acetylation at actively transcribed genes. In Xenopus tropicalis (Western clawed frog), this protein is PWWP domain-containing protein 2A (pwwp2a).